Consider the following 368-residue polypeptide: Metacaspase-6 (368 aa).

Catalysis depends on residues histidine 86 and cysteine 139. Cysteine 139 is subject to S-nitrosocysteine. The tract at residues 153–174 is disordered; sequence GESTKKKKDSGDSSTINKETEA.

The protein belongs to the peptidase C14B family. Proteolytically processed; by an autocatalytic mechanism. Expressed in roots and flower buds.

This Arabidopsis thaliana (Mouse-ear cress) protein is Metacaspase-6 (AMC6).